The sequence spans 331 residues: Biotin synthase (331 aa).

The Radical SAM core domain maps to 52–281 (FFQNKVKLNM…TKEIRVSGGR (230 aa)). Positions 70, 74, and 77 each coordinate [4Fe-4S] cluster. The [2Fe-2S] cluster site is built by C114, C146, C206, and R276.

The protein belongs to the radical SAM superfamily. Biotin synthase family. Homodimer. It depends on [4Fe-4S] cluster as a cofactor. [2Fe-2S] cluster serves as cofactor.

The enzyme catalyses (4R,5S)-dethiobiotin + (sulfur carrier)-SH + 2 reduced [2Fe-2S]-[ferredoxin] + 2 S-adenosyl-L-methionine = (sulfur carrier)-H + biotin + 2 5'-deoxyadenosine + 2 L-methionine + 2 oxidized [2Fe-2S]-[ferredoxin]. It participates in cofactor biosynthesis; biotin biosynthesis; biotin from 7,8-diaminononanoate: step 2/2. Functionally, catalyzes the conversion of dethiobiotin (DTB) to biotin by the insertion of a sulfur atom into dethiobiotin via a radical-based mechanism. This chain is Biotin synthase, found in Bacillus pumilus (strain SAFR-032).